The sequence spans 197 residues: Transcription factor FapR (197 aa).

Belongs to the FapR family.

Functionally, transcriptional factor involved in regulation of membrane lipid biosynthesis by repressing genes involved in fatty acid and phospholipid metabolism. This chain is Transcription factor FapR, found in Bacillus anthracis (strain A0248).